Here is a 56-residue protein sequence, read N- to C-terminus: Large ribosomal subunit protein bL32 (56 aa).

The tract at residues 1-37 (MAVQQNKKSRSKRGMRRSHDALSTAQLSVDATSGELH) is disordered. Basic residues predominate over residues 7-16 (KKSRSKRGMR). Polar residues predominate over residues 21-31 (ALSTAQLSVDA).

The protein belongs to the bacterial ribosomal protein bL32 family.

This is Large ribosomal subunit protein bL32 from Shewanella pealeana (strain ATCC 700345 / ANG-SQ1).